Here is a 178-residue protein sequence, read N- to C-terminus: MSRIADNPVSIPKGVEVTLSGDNDIKVKGAKGSLAFAIHPLIQVVQDGETLRFSAKSTDKRVNALRGTTRALINNMVQGVSQGFERRLQLVGVGYRAQLQGRKLVLSLGYSHPVEFTAPEGLTIEVPSPTEIIVKGYDKQQVGQAAANIRRFRPPEPYKGKGVRYADEVVVRKEAKKK.

It belongs to the universal ribosomal protein uL6 family. Part of the 50S ribosomal subunit.

In terms of biological role, this protein binds to the 23S rRNA, and is important in its secondary structure. It is located near the subunit interface in the base of the L7/L12 stalk, and near the tRNA binding site of the peptidyltransferase center. The sequence is that of Large ribosomal subunit protein uL6 from Nitrosococcus oceani (strain ATCC 19707 / BCRC 17464 / JCM 30415 / NCIMB 11848 / C-107).